Here is a 428-residue protein sequence, read N- to C-terminus: AP-1 complex subunit mu-1 (428 aa).

An MHD domain is found at 170–426 (KNEVFLDVIE…ITMAGEYELR (257 aa)).

The protein belongs to the adaptor complexes medium subunit family. As to quaternary structure, adaptor protein complex 1 (AP-1) is a heterotetramer composed of two large adaptins (gamma-type subunit and beta-type subunit), a medium adaptin (mu-type subunit) and a small adaptin (sigma-type subunit).

The protein resides in the golgi apparatus. It localises to the cytoplasmic vesicle. It is found in the clathrin-coated vesicle membrane. Functionally, subunit of clathrin-associated adaptor protein complex 1 that plays a role in protein sorting at the trans-Golgi network and early endosomes (TGN/EE). The AP complexes mediate the recruitment of clathrin to membranes and the recognition of sorting signals within the cytosolic tails of transmembrane cargo molecules. Functions redundantly with AP1M2 in multiple post-Golgi trafficking pathways leading from the TGN to the vacuole, the plasma membrane, and the cell-division plane. The protein is AP-1 complex subunit mu-1 (AP1M1) of Arabidopsis thaliana (Mouse-ear cress).